A 231-amino-acid chain; its full sequence is Flagellar L-ring protein (231 aa).

A signal peptide spans 1-18 (MNRLMIVSLLGIATALGG). Cysteine 19 is lipidated: N-palmitoyl cysteine. Cysteine 19 carries the S-diacylglycerol cysteine lipid modification. The disordered stretch occupies residues 118-141 (LSLSAEYGGSRDAKGDSQAGQSNS).

This sequence belongs to the FlgH family. In terms of assembly, the basal body constitutes a major portion of the flagellar organelle and consists of four rings (L,P,S, and M) mounted on a central rod.

The protein resides in the cell outer membrane. Its subcellular location is the bacterial flagellum basal body. Its function is as follows. Assembles around the rod to form the L-ring and probably protects the motor/basal body from shearing forces during rotation. This Pseudomonas aeruginosa (strain LESB58) protein is Flagellar L-ring protein.